Here is a 295-residue protein sequence, read N- to C-terminus: CRISPR-associated endonuclease Cas1 2 (295 aa).

3 residues coordinate Mn(2+): E155, H215, and E230.

Belongs to the CRISPR-associated endonuclease Cas1 family. Homodimer, forms a heterotetramer with a Cas2 homodimer. Mg(2+) serves as cofactor. Mn(2+) is required as a cofactor.

Its function is as follows. CRISPR (clustered regularly interspaced short palindromic repeat), is an adaptive immune system that provides protection against mobile genetic elements (viruses, transposable elements and conjugative plasmids). CRISPR clusters contain spacers, sequences complementary to antecedent mobile elements, and target invading nucleic acids. CRISPR clusters are transcribed and processed into CRISPR RNA (crRNA). Acts as a dsDNA endonuclease. Involved in the integration of spacer DNA into the CRISPR cassette. This Pyrobaculum aerophilum (strain ATCC 51768 / DSM 7523 / JCM 9630 / CIP 104966 / NBRC 100827 / IM2) protein is CRISPR-associated endonuclease Cas1 2.